The chain runs to 145 residues: D-aminoacyl-tRNA deacylase (145 aa).

A Gly-cisPro motif, important for rejection of L-amino acids motif is present at residues 137–138 (GP).

This sequence belongs to the DTD family. As to quaternary structure, homodimer.

It localises to the cytoplasm. It catalyses the reaction glycyl-tRNA(Ala) + H2O = tRNA(Ala) + glycine + H(+). The catalysed reaction is a D-aminoacyl-tRNA + H2O = a tRNA + a D-alpha-amino acid + H(+). Functionally, an aminoacyl-tRNA editing enzyme that deacylates mischarged D-aminoacyl-tRNAs. Also deacylates mischarged glycyl-tRNA(Ala), protecting cells against glycine mischarging by AlaRS. Acts via tRNA-based rather than protein-based catalysis; rejects L-amino acids rather than detecting D-amino acids in the active site. By recycling D-aminoacyl-tRNA to D-amino acids and free tRNA molecules, this enzyme counteracts the toxicity associated with the formation of D-aminoacyl-tRNA entities in vivo and helps enforce protein L-homochirality. In Salmonella paratyphi A (strain AKU_12601), this protein is D-aminoacyl-tRNA deacylase.